A 499-amino-acid chain; its full sequence is Neuronal acetylcholine receptor subunit alpha-3 (499 aa).

Residues 1 to 25 (MGVVLLPPPLSMLMLVLMLLPAASA) form the signal peptide. The Extracellular segment spans residues 26-244 (SEAEHRLFQY…PLFYTINLII (219 aa)). Residues Asn49 and Asn166 are each glycosylated (N-linked (GlcNAc...) asparagine). Cystine bridges form between Cys153-Cys167 and Cys217-Cys218. The helical transmembrane segment at 245–260 (PCLLISFLTVLVFYLP) threads the bilayer. The Cytoplasmic segment spans residues 261–262 (SD). Residues 263–279 (CGEKVTLCISVLLSLTV) traverse the membrane as a helical segment. Glu265 lines the Na(+) pocket. Residues 280–301 (FLLVITETIPSTSLVIPLIGEY) lie on the Extracellular side of the membrane. A helical transmembrane segment spans residues 302–320 (LLFTMIFVTLSIVITVFVL). At 321-468 (NVHYRTPTTH…QDDWKYVAMV (148 aa)) the chain is on the cytoplasmic side. 2 positions are modified to phosphoserine: Ser407 and Ser410. Residues 469-487 (IDRIFLWVFILVCILGTAG) form a helical membrane-spanning segment. The Extracellular segment spans residues 488-499 (LFLQPLMARDDT).

Belongs to the ligand-gated ion channel (TC 1.A.9) family. Acetylcholine receptor (TC 1.A.9.1) subfamily. Alpha-3/CHRNA3 sub-subfamily. Neuronal AChR is composed of two different types of subunits: alpha and beta. CHRNA3/Alpha-3 subunit can be combined to CHRNB2/beta-2 or CHRNB4/beta-4 to give rise to functional receptors. Part of a complex composed of STUB1/CHIP, VCP/p97, CHRNA3, and UBXN2A that modulates the ubiquitination and endoplasmic reticulum-associated degradation (ERAD) of CHRNA3. Within the complex UBXN2A acts as a scaffold protein required for the interaction of CHRNA3 with VCP/p97, this interaction also inhibits CHRNA3 ubiquitination by STUB1/CHIP and subsequently ERAD. Interacts with UBXN2A (via SEP domain), the interaction is required for the interaction of CHRNA3 in the STUB1:VCP:UBXN2A complex. Interacts with RIC3; which is required for proper folding and assembly. Ubiquitinated; by STUB1/CHIP and thereafter degraded by the 26S proteosome complex. As to expression, expressed in neurons. Expressed in umbrella cells of urothelium (at protein level).

It localises to the synaptic cell membrane. The protein localises to the cell membrane. Its subcellular location is the endoplasmic reticulum. The protein resides in the golgi apparatus. It carries out the reaction Ca(2+)(in) = Ca(2+)(out). It catalyses the reaction K(+)(in) = K(+)(out). The catalysed reaction is Na(+)(in) = Na(+)(out). Activated by a myriad of ligands such as acetylcholine, cytisine, nicotine, choline and epibatidine. The heteropentamer CHRNA3:CHRNB2 activity is blocked by alpha-conotoxins ImI, ImII, PnIA, GID and MII. The heteropentamer CHRNA3:CHRNB4 activity is blocked by the alpha-conotoxin ImI and AuIB. Its function is as follows. Component of neuronal acetylcholine receptors (nAChRs) that function as pentameric, ligand-gated cation channels with high calcium permeability among other activities. nAChRs are excitatory neurotrasnmitter receptors formed by a collection of nAChR subunits known to mediate synaptic transmission in the nervous system and the neuromuscular junction. Each nAchR subunit confers differential attributes to channel properties, including activation, deactivation and desensitization kinetics, pH sensitivity, cation permeability, and binding to allosteric modulators. CHRNA3 forms heteropentameric neuronal acetylcholine receptors with CHRNB2 and CHRNB4. CHRNA3:CHRNB4 being predominant in neurons of the autonomic ganglia, it is known as ganglionic nicotinic receptor. CHRNA3:CHRNB4 also plays an important role in the habenulo-interpeduncular tract, modulating the mesolimbic dopamine system and affecting reward circuits and addiction. Hypothalamic CHRNA3:CHRNB4 nAChR activation by nicotine leads to activation of POMC neurons and a decrease in food intake. Also expressed in the urothelium where it modulates reflex bladder activity by increasing intracellular calcium through extracellular influx and basal ATP release. The sequence is that of Neuronal acetylcholine receptor subunit alpha-3 (Chrna3) from Rattus norvegicus (Rat).